The chain runs to 195 residues: MPIGVPKVPFRIPGEEDNRLYRERLLFPGQQVDDEIANQLIGIMMYLNGEDENKDIYPYINSPGGAVIPGISIYDAMQFVVPDVHTICMGLAASMGSSVLTGGEITKRIALPHARVMIHQPASSYYDGQAGECIMEAEEVLKLRDSITNVYVQRTGKPLWVISGDMERDVFMSATEAQAYGIVDLVAVENTEDLL.

The Nucleophile role is filled by serine 94. The active site involves histidine 119.

The protein belongs to the peptidase S14 family. In terms of assembly, component of the chloroplastic Clp protease core complex.

It localises to the plastid. The protein resides in the chloroplast stroma. The catalysed reaction is Hydrolysis of proteins to small peptides in the presence of ATP and magnesium. alpha-casein is the usual test substrate. In the absence of ATP, only oligopeptides shorter than five residues are hydrolyzed (such as succinyl-Leu-Tyr-|-NHMec, and Leu-Tyr-Leu-|-Tyr-Trp, in which cleavage of the -Tyr-|-Leu- and -Tyr-|-Trp bonds also occurs).. In terms of biological role, cleaves peptides in various proteins in a process that requires ATP hydrolysis. Has a chymotrypsin-like activity. Plays a major role in the degradation of misfolded proteins. This Cycas taitungensis (Prince sago) protein is ATP-dependent Clp protease proteolytic subunit.